The primary structure comprises 239 residues: O-antigen export system ATP-binding protein RfbE (239 aa).

One can recognise an ABC transporter domain in the interval 28–239 (VRVSTGGRIG…LIYEESMDIL (212 aa)). Residue 66–73 (GHNGAGKS) coordinates ATP.

The protein belongs to the ABC transporter superfamily.

The protein resides in the cell inner membrane. Functionally, may form an ATP-driven O-antigen export apparatus, in association with RfbD. In Yersinia enterocolitica, this protein is O-antigen export system ATP-binding protein RfbE (rfbE).